The sequence spans 970 residues: MANFLQDVNCETVSEYDGPDASIPEGVWEGYVGHDHAALWRTWSYIYECCKKGTLVQFRGGKLVTFSMFDNPRFSNGAGIDAQKVLDLEDRARELQGYGPVNRRTDVMPVDRWTLNGPLLRYDKMVLEDVGGTGSNRTMVRAQLEALQDERDVPDCDFILNVRDYPLLRRDGTRPYPQVYGKGRRLPEPWARGGPHVPVVSMCSGPTYADIAVPTYECIAHAYTSSGRTLPAGGRFVKTPSADSLPAWRDRKALAVFRGSSTGAGTSTEDNQRLRALQISMSRPDLADVGITKWNLRPRKTERYDGYRIIEPWQFGRKSPYPAAAKPMTPEQIAGYKYVLCLWGHAPAFRLARDLSLGSVVLLPSRPPGQEGLDMWHSSVLKPWTHYIPVRGDLSDLEKRIEWCRDNDAECEKIAAAGMEASLNLLGWEGQLDRWMDVLRSVRLECCPGGYDMPPSPSLVSDSMCVRQMVSFPRYEDIPQPSSPMPVLPRCSGTLRGWGLAASLGWDLGDAAEVLNVKRSTAVLSKTVFNNLIYRTPHLRYTFGVAASDPESTAAVILSEKLKGAVTMRSWLEDSRAWARGRNVASVLCQVSQALLEAQAAAGTVFGDLSLDTILVVPNPLPEYIYHDGTGGSFGLKLMPGDKWAVVTYGDYTRARIRVLKGDGRKGHLAVVGPQPVYTKLSERKWHDICCLVSCILRTARTSKRPAARALAAAVARAAGVKRPDMDAEALEATPYEAREEPLTRFGPAEFINGLVREFKLEEGGWAWTEKNKNIEKVLRPWERGLPLYPVRLWLSGDRKEAMRACVSSVLKAAPPRPATAAGAHHTFQTYLRTVGADLDSFPEWAAAAAHLKRLWKSPGSLPAGSASLRAPSVPPPCHGPAWALPFGTRTPGEFPSWFDPSCLGDWTEAMGQGAPLDLENGPAKAGSDPVAVHSAWETASQLSFEEDGWTESEPRPVRREAHVRAKERH.

Residues 942 to 970 form a disordered region; that stretch reads QLSFEEDGWTESEPRPVRREAHVRAKERH. The segment covering 953–970 has biased composition (basic and acidic residues); it reads SEPRPVRREAHVRAKERH.

This is an uncharacterized protein from Frog virus 3 (isolate Goorha) (FV-3).